A 329-amino-acid chain; its full sequence is Calponin-3 (329 aa).

At lysine 23 the chain carries N6-acetyllysine. One can recognise a Calponin-homology (CH) domain in the interval 26–130; sequence HQAEEDLRNW…TLVALAGLAK (105 aa). The residue at position 158 (lysine 158) is an N6-methyllysine. Calponin-like repeat units follow at residues 164–189, 204–229, and 243–268; these read IGLQ…RHLY, ISLQ…RDIY, and ISLQ…RQVY. Positions 280–329 are disordered; it reads VIHNGSQGTGTNGSEISDSDYQAEYPDEYHGEYQDDYPRDYQYGDQGIDY. The span at 306–318 shows a compositional bias: basic and acidic residues; that stretch reads DEYHGEYQDDYPR.

It belongs to the calponin family.

Its function is as follows. Thin filament-associated protein that is implicated in the regulation and modulation of smooth muscle contraction. It is capable of binding to actin, calmodulin and tropomyosin. The interaction of calponin with actin inhibits the actomyosin Mg-ATPase activity. This Bos taurus (Bovine) protein is Calponin-3 (CNN3).